A 551-amino-acid chain; its full sequence is Cysteine desulfurase SufS (551 aa).

A signal peptide spans 1–22; it reads MRPSSAAWICLLLRIANYTCYS. K327 is modified (N6-(pyridoxal phosphate)lysine). The Cysteine persulfide intermediate role is filled by C500.

This sequence belongs to the class-V pyridoxal-phosphate-dependent aminotransferase family. Csd subfamily. As to quaternary structure, monomer. Interacts with SufE; interaction enhances cysteine desulfurase activity of SufS. The cofactor is pyridoxal 5'-phosphate.

The protein localises to the plastid. Its subcellular location is the apicoplast. It carries out the reaction (sulfur carrier)-H + L-cysteine = (sulfur carrier)-SH + L-alanine. Its pathway is cofactor biosynthesis; iron-sulfur cluster biosynthesis. Its function is as follows. Catalyzes sulfur activation and mobilization in sulfur mobilization (SUF) pathway for iron-sulfur (Fe-S) cluster biogenesis. Active when in complex with a partner protein SufE. Required for apicoplast maintenance. Plays a role in the development of sporozoites in oocysts in mosquitoes. The chain is Cysteine desulfurase SufS from Plasmodium vivax.